Here is a 506-residue protein sequence, read N- to C-terminus: NAD(P)H-quinone oxidoreductase subunit 2 (506 aa).

The next 13 helical transmembrane spans lie at 14–34 (AIIP…VDLA), 42–62 (WAPI…ALQW), 79–99 (LAIS…LISW), 108–128 (PIGE…LLCG), 132–152 (LISV…LSGY), 167–187 (LLVG…LYGL), 206–226 (FITS…IAAV), 240–260 (PTPV…AFAI), 276–296 (LLFT…ALAQ), 302–322 (MLAY…VSGT), 330–350 (VLYL…VILF), 374–394 (LGLS…GFFG), and 409–429 (LLVI…ISVI).

This sequence belongs to the complex I subunit 2 family. As to quaternary structure, NDH-1 can be composed of about 15 different subunits; different subcomplexes with different compositions have been identified which probably have different functions.

It is found in the cellular thylakoid membrane. It catalyses the reaction a plastoquinone + NADH + (n+1) H(+)(in) = a plastoquinol + NAD(+) + n H(+)(out). It carries out the reaction a plastoquinone + NADPH + (n+1) H(+)(in) = a plastoquinol + NADP(+) + n H(+)(out). In terms of biological role, NDH-1 shuttles electrons from an unknown electron donor, via FMN and iron-sulfur (Fe-S) centers, to quinones in the respiratory and/or the photosynthetic chain. The immediate electron acceptor for the enzyme in this species is believed to be plastoquinone. Couples the redox reaction to proton translocation, and thus conserves the redox energy in a proton gradient. Cyanobacterial NDH-1 also plays a role in inorganic carbon-concentration. This is NAD(P)H-quinone oxidoreductase subunit 2 from Prochlorococcus marinus (strain MIT 9215).